We begin with the raw amino-acid sequence, 347 residues long: MAKSLSYADAGVDIDKANRLVDRIKTIVKSTPRQGVIGGIGGFGGLFSLNTEQYERPVLVSSTDGVGTKLRVAIMMDKHDTIGIDLVAMSVNDILVQGAKPLFFLDYLSMGKLNENTAADIIEGVAEGCRQANCALIGGETAEMPGMYEDGDYDLAGFAVGIADNFKIVDGSDVGQGNVLLGIASTGLHSNGYSLARKVFFDHLGLKVDSYVEDLGMTVGEAMLEPTKIYAEIVRNLIRDIHVNGMAHITGGGIIDNLPRTIPQSCKAIIREGSWEYPAIFPFMKKAGDIDEMEMMRTFNNGIGLVAVIPEPQVQEALELMQAMGEKAYVIGEIAARGENDDRIEWK.

This sequence belongs to the AIR synthase family.

It localises to the cytoplasm. It carries out the reaction 2-formamido-N(1)-(5-O-phospho-beta-D-ribosyl)acetamidine + ATP = 5-amino-1-(5-phospho-beta-D-ribosyl)imidazole + ADP + phosphate + H(+). It participates in purine metabolism; IMP biosynthesis via de novo pathway; 5-amino-1-(5-phospho-D-ribosyl)imidazole from N(2)-formyl-N(1)-(5-phospho-D-ribosyl)glycinamide: step 2/2. The sequence is that of Phosphoribosylformylglycinamidine cyclo-ligase from Desulfatibacillum aliphaticivorans.